Consider the following 128-residue polypeptide: MPKTIITPPGTGKPLAPFVPGTLADGVVYVSGTLAFDKNNNVVHVGDAAAQTRHVLETIKSVIETAGGCMDDVTFNSIFLTDWQNYAAINQVYAEYFPGDKPARYCIQCGLVKPDALIEIATVAHIGR.

Belongs to the RutC family.

The catalysed reaction is (Z)-3-aminoacrylate + H2O + H(+) = 3-oxopropanoate + NH4(+). Involved in pyrimidine catabolism. Catalyzes the deamination of 3-aminoacrylate to malonic semialdehyde, a reaction that can also occur spontaneously. RutC may facilitate the reaction and modulate the metabolic fitness, rather than catalyzing essential functions. The chain is 3-aminoacrylate deaminase RutC from Serratia proteamaculans (strain 568).